The following is a 154-amino-acid chain: Resuscitation-promoting factor RpfD (154 aa).

A helical transmembrane segment spans residues 21–41; that stretch reads IVCTVFIETAVVATMFVALLG.

Belongs to the transglycosylase family. Rpf subfamily.

The protein localises to the cell membrane. Factor that stimulates resuscitation of dormant cells. Has peptidoglycan (PG) hydrolytic activity. PG fragments could either directly activate the resuscitation pathway of dormant bacteria or serve as a substrate for endogenous Rpf, resulting in low molecular weight products with resuscitation activity. The chain is Resuscitation-promoting factor RpfD (rpfD) from Mycobacterium tuberculosis (strain CDC 1551 / Oshkosh).